The chain runs to 457 residues: Putative HD domain-containing protein L394 (457 aa).

Residues 65-206 (RLEHSIGVYD…GIDVDKFDYL (142 aa)) enclose the HD domain.

In Acanthamoeba polyphaga mimivirus (APMV), this protein is Putative HD domain-containing protein L394.